The following is a 171-amino-acid chain: Endoribonuclease YbeY (171 aa).

Positions 115, 119, and 125 each coordinate Zn(2+).

The protein belongs to the endoribonuclease YbeY family. It depends on Zn(2+) as a cofactor.

The protein localises to the cytoplasm. In terms of biological role, single strand-specific metallo-endoribonuclease involved in late-stage 70S ribosome quality control and in maturation of the 3' terminus of the 16S rRNA. This chain is Endoribonuclease YbeY, found in Tropheryma whipplei (strain TW08/27) (Whipple's bacillus).